Here is a 148-residue protein sequence, read N- to C-terminus: UPF0735 ACT domain-containing protein Dred_1164 (148 aa).

Positions 72-147 (TLALLMEHQP…GVREVRLVGQ (76 aa)) constitute an ACT domain.

This sequence belongs to the UPF0735 family.

The protein is UPF0735 ACT domain-containing protein Dred_1164 of Desulforamulus reducens (strain ATCC BAA-1160 / DSM 100696 / MI-1) (Desulfotomaculum reducens).